The sequence spans 617 residues: Tetratricopeptide repeat protein 39B (617 aa).

TPR repeat units follow at residues 328-361 (SLIL…QEEW), 520-553 (CLVK…EKLL), and 561-594 (PFTL…YKDY).

It belongs to the TTC39 family. High expression in lung and spleen. Low lower expression in liver and small intestine. Weak expression in heart, brain, kidney, adipose, and adrenal gland.

Functionally, regulates high density lipoprotein (HDL) cholesterol metabolism by promoting the ubiquitination and degradation of the oxysterols receptors LXR (NR1H2 and NR1H3). This Mus musculus (Mouse) protein is Tetratricopeptide repeat protein 39B.